The chain runs to 232 residues: Phosphoglycolate phosphatase (232 aa).

The active-site Nucleophile is Asp8. Mg(2+) is bound by residues Asp8 and Asp10. Lys155 contributes to the substrate binding site. The Mg(2+) site is built by Asp178 and Asp182.

Belongs to the archaeal SPP-like hydrolase family. The cofactor is Mg(2+).

The enzyme catalyses 2-phosphoglycolate + H2O = glycolate + phosphate. In terms of biological role, catalyzes the dephosphorylation of 2-phosphoglycolate. This Methanospirillum hungatei JF-1 (strain ATCC 27890 / DSM 864 / NBRC 100397 / JF-1) protein is Phosphoglycolate phosphatase.